A 250-amino-acid chain; its full sequence is 5-oxoprolinase subunit A (250 aa).

It belongs to the LamB/PxpA family. As to quaternary structure, forms a complex composed of PxpA, PxpB and PxpC.

The enzyme catalyses 5-oxo-L-proline + ATP + 2 H2O = L-glutamate + ADP + phosphate + H(+). In terms of biological role, catalyzes the cleavage of 5-oxoproline to form L-glutamate coupled to the hydrolysis of ATP to ADP and inorganic phosphate. In Staphylococcus aureus (strain bovine RF122 / ET3-1), this protein is 5-oxoprolinase subunit A.